A 368-amino-acid chain; its full sequence is POU domain, class 3, transcription factor 1 (368 aa).

Over residues 1 to 16 (MATTAQYIPRNNSLPS) the composition is skewed to polar residues. Disordered stretches follow at residues 1 to 28 (MATTAQYIPRNNSLPSNPLMHPDSDRMH), 69 to 88 (TDWTSGTHIGQAEHNKASVQ), 100 to 134 (SHLVHQPTQNSHHGSWAPTTTHHLSPLSPASNGHQ), and 147 to 193 (SPQP…PSSD). Residues 79 to 88 (QAEHNKASVQ) show a composition bias toward basic and acidic residues. Polar residues predominate over residues 105–134 (QPTQNSHHGSWAPTTTHHLSPLSPASNGHQ). The span at 155-170 (GLRDPLHDDAGSHDNQ) shows a compositional bias: basic and acidic residues. In terms of domain architecture, POU-specific spans 187–261 (EDAPSSDDLE…LLNKWLEETD (75 aa)). The homeobox DNA-binding region spans 279 to 338 (KRKKRTSIEVGVKGALENHFLKCPKPSAHEITTLAGTLQLEKEVVRVWFCNRRQKEKRMT).

Belongs to the POU transcription factor family. Class-3 subfamily. Predominantly expressed in the embryonic and adult central nervous system.

It is found in the nucleus. Functionally, transcription factor that may play important roles in patterning the embryonic brain. Could directly respond to the reception of the sonic hedgehog (shh) signal. The polypeptide is POU domain, class 3, transcription factor 1 (pou3f1) (Danio rerio (Zebrafish)).